The primary structure comprises 404 residues: Cytoplasmic tRNA 2-thiolation protein 2 (404 aa).

This sequence belongs to the CTU2/NCS2 family.

Its subcellular location is the cytoplasm. It participates in tRNA modification; 5-methoxycarbonylmethyl-2-thiouridine-tRNA biosynthesis. Functionally, plays a central role in 2-thiolation of mcm(5)S(2)U at tRNA wobble positions of tRNA(Lys), tRNA(Glu) and tRNA(Gln). May act by forming a heterodimer with NCS6/CTU1 that ligates sulfur from thiocarboxylated URM1 onto the uridine of tRNAs at wobble position. This Drosophila yakuba (Fruit fly) protein is Cytoplasmic tRNA 2-thiolation protein 2.